The sequence spans 57 residues: Large ribosomal subunit protein bL32 (57 aa).

Belongs to the bacterial ribosomal protein bL32 family.

The sequence is that of Large ribosomal subunit protein bL32 from Shouchella clausii (strain KSM-K16) (Alkalihalobacillus clausii).